The chain runs to 339 residues: Glutamyl-tRNA reductase (339 aa).

Residues 50-53, Ser102, 107-109, and Gln113 contribute to the substrate site; these read TCHR and ETE. The active-site Nucleophile is Cys51. 181-186 contributes to the NADP(+) binding site; that stretch reads GYSDIN.

Belongs to the glutamyl-tRNA reductase family. As to quaternary structure, homodimer.

It catalyses the reaction (S)-4-amino-5-oxopentanoate + tRNA(Glu) + NADP(+) = L-glutamyl-tRNA(Glu) + NADPH + H(+). It participates in porphyrin-containing compound metabolism; protoporphyrin-IX biosynthesis; 5-aminolevulinate from L-glutamyl-tRNA(Glu): step 1/2. Catalyzes the NADPH-dependent reduction of glutamyl-tRNA(Glu) to glutamate 1-semialdehyde (GSA). The sequence is that of Glutamyl-tRNA reductase from Chlamydia pneumoniae (Chlamydophila pneumoniae).